Consider the following 426-residue polypeptide: Glutamate-1-semialdehyde 2,1-aminomutase (426 aa).

K265 bears the N6-(pyridoxal phosphate)lysine mark.

Belongs to the class-III pyridoxal-phosphate-dependent aminotransferase family. HemL subfamily. In terms of assembly, homodimer. Pyridoxal 5'-phosphate is required as a cofactor.

The protein localises to the cytoplasm. It catalyses the reaction (S)-4-amino-5-oxopentanoate = 5-aminolevulinate. Its pathway is porphyrin-containing compound metabolism; protoporphyrin-IX biosynthesis; 5-aminolevulinate from L-glutamyl-tRNA(Glu): step 2/2. The sequence is that of Glutamate-1-semialdehyde 2,1-aminomutase from Enterobacter sp. (strain 638).